A 503-amino-acid polypeptide reads, in one-letter code: Carboxyl-terminal PDZ ligand of neuronal nitric oxide synthase protein (503 aa).

Positions 26–191 (FQHGISFEAK…ESERNSDGSG (166 aa)) constitute a PID domain. The segment at 170-212 (HTQQNADGQEDGESERNSDGSGDPGRQLTGAERVSTAAAEETD) is disordered. Residues serine 183, serine 187, serine 190, and serine 262 each carry the phosphoserine modification. The stretch at 318–359 (AAEAAARLEAQARVHQLLLQNKDMLQHISLLVKQVQELELKL) forms a coiled coil. Serine 367, serine 370, serine 397, and serine 413 each carry phosphoserine. The interval 491–503 (QELGDSLDDEIAV) is interaction with NOS1. Residues 501–503 (IAV) carry the PDZ-binding motif.

In terms of assembly, interacts with the PDZ domain of NOS1 or the second PDZ domain of DLG4 through its C-terminus. Interacts with RASD1 and SYN1, SYN2 and SYN3 via its PID domain. Forms a ternary complex with NOS1 and SYN1. Forms a ternary complex with NOS1 and RASD1.

The protein resides in the cell projection. The protein localises to the filopodium. Its subcellular location is the podosome. Its function is as follows. Adapter protein involved in neuronal nitric-oxide (NO) synthesis regulation via its association with nNOS/NOS1. The complex formed with NOS1 and synapsins is necessary for specific NO and synapsin functions at a presynaptic level. Mediates an indirect interaction between NOS1 and RASD1 leading to enhance the ability of NOS1 to activate RASD1. Competes with DLG4 for interaction with NOS1, possibly affecting NOS1 activity by regulating the interaction between NOS1 and DLG4. In kidney podocytes, plays a role in podosomes and filopodia formation through CDC42 activation. This chain is Carboxyl-terminal PDZ ligand of neuronal nitric oxide synthase protein, found in Mus musculus (Mouse).